Consider the following 382-residue polypeptide: Inactive ubiquitin-specific protease 5 (382 aa).

A DUSP domain is found at 16–141 (VPAEEERALI…GGPTLPRKAI (126 aa)). The 60-residue stretch at 323-382 (TGLLNLGNTCFMNSAIQCLVHTPEFARYFREDYHREINWQNPLGMVVSTLSTSMALKPYV) folds into the USP domain.

This sequence belongs to the peptidase C19 family. Widely expressed with the highest expression in floral organs.

It localises to the cell membrane. Its function is as follows. Plays an important role in the development of floral organs and chloroplasts. Does not possess deubiquitinating enzyme activity in vitro. The chain is Inactive ubiquitin-specific protease 5 from Oryza sativa subsp. japonica (Rice).